The following is a 389-amino-acid chain: 5-hydroxytryptamine receptor 1B (389 aa).

Residues 1–27 (MEAAGAPCAPPPPAGSQTGAPPANLSS) form a disordered region. Over 1 to 45 (MEAAGAPCAPPPPAGSQTGAPPANLSSAPHNCSAEGYIYQDSVAL) the chain is Extracellular. Positions 16–27 (SQTGAPPANLSS) are enriched in polar residues. Residues Asn-24 and Asn-31 are each glycosylated (N-linked (GlcNAc...) asparagine). A helical membrane pass occupies residues 46–71 (PWKVLLVILLALITLATTLSNAFVIA). The Cytoplasmic segment spans residues 72 to 85 (TVYRTRKLHTPANY). Residues 86–110 (LIASLAVTDLLVSILVMPISTMYTV) form a helical membrane-spanning segment. Over 111-118 (TGRWTLGQ) the chain is Extracellular. A helical transmembrane segment spans residues 119 to 144 (VVCDLWLSSDITCCTASILHLCVIAL). Residues Cys-121 and Cys-198 are joined by a disulfide bond. 2 residues coordinate ergotamine: Asp-128 and Thr-133. A DRY motif; important for ligand-induced conformation changes and signaling motif is present at residues 145–147 (DRY). Residues 145–164 (DRYWAITDAVEYSAKRTPKR) lie on the Cytoplasmic side of the membrane. The chain crosses the membrane as a helical span at residues 165 to 183 (AAVMIALVWVFSISISLPP). Topologically, residues 184–204 (FFWRQAKAEEEVSDCVVNTDH) are extracellular. An ergotamine-binding site is contributed by Val-200. Residues 205–228 (ILYTVYSTVGAFYFPTLLLIALYG) form a helical membrane-spanning segment. Topologically, residues 229-314 (RIYVEARSRI…AARERKATKT (86 aa)) are cytoplasmic. A compositionally biased stretch (polar residues) spans 258 to 271 (DSPGSTSSVTSVNS). The interval 258 to 281 (DSPGSTSSVTSVNSRAPDVPSESG) is disordered. Residues 315-336 (LGIILGAFIVCWLPFFIISLVM) traverse the membrane as a helical segment. The Extracellular portion of the chain corresponds to 337–346 (PICKDACWFH). A helical membrane pass occupies residues 347 to 369 (LAIFDFFTWLGYLNSLINPIIYT). Positions 364 to 368 (NPIIY) match the NPxxY motif; important for ligand-induced conformation changes and signaling motif. Topologically, residues 370–389 (MSNEDFKQAFHKLIRFKCAG) are cytoplasmic. A lipid anchor (S-palmitoyl cysteine) is attached at Cys-387.

This sequence belongs to the G-protein coupled receptor 1 family. As to quaternary structure, homodimer. Heterodimer with HTR1D. Post-translationally, phosphorylated. Desensitization of the receptor may be mediated by its phosphorylation. Palmitoylated.

The protein resides in the cell membrane. In terms of biological role, G-protein coupled receptor for 5-hydroxytryptamine (serotonin). Also functions as a receptor for ergot alkaloid derivatives, various anxiolytic and antidepressant drugs and other psychoactive substances, such as lysergic acid diethylamide (LSD). Ligand binding causes a conformation change that triggers signaling via guanine nucleotide-binding proteins (G proteins) and modulates the activity of downstream effectors, such as adenylate cyclase. HTR1B is coupled to G(i)/G(o) G alpha proteins and mediates inhibitory neurotransmission by inhibiting adenylate cyclase activity. Arrestin family members inhibit signaling via G proteins and mediate activation of alternative signaling pathways. Regulates the release of 5-hydroxytryptamine, dopamine and acetylcholine in the brain, and thereby affects neural activity, nociceptive processing, pain perception, mood and behavior. Besides, plays a role in vasoconstriction of cerebral arteries. This chain is 5-hydroxytryptamine receptor 1B (HTR1B), found in Canis lupus familiaris (Dog).